The sequence spans 351 residues: Photosystem II D2 protein (351 aa).

A helical membrane pass occupies residues threonine 39–threonine 59. Histidine 116 provides a ligand contact to chlorophyll a. The helical transmembrane segment at glycine 123–proline 139 threads the bilayer. Pheophytin a contacts are provided by glutamine 128 and asparagine 141. The helical transmembrane segment at isoleucine 151–alanine 164 threads the bilayer. Position 196 (histidine 196) interacts with chlorophyll a. A helical membrane pass occupies residues alanine 206–aspartate 226. The a plastoquinone site is built by histidine 213 and phenylalanine 260. Histidine 213 lines the Fe cation pocket. Fe cation is bound at residue histidine 267. A helical membrane pass occupies residues glycine 277–arginine 293.

Belongs to the reaction center PufL/M/PsbA/D family. As to quaternary structure, PSII is composed of 1 copy each of membrane proteins PsbA, PsbB, PsbC, PsbD, PsbE, PsbF, PsbH, PsbI, PsbJ, PsbK, PsbL, PsbM, PsbT, PsbX, PsbY, PsbZ, Psb30/Ycf12, at least 3 peripheral proteins of the oxygen-evolving complex and a large number of cofactors. It forms dimeric complexes. The D1/D2 heterodimer binds P680, chlorophylls that are the primary electron donor of PSII, and subsequent electron acceptors. It shares a non-heme iron and each subunit binds pheophytin, quinone, additional chlorophylls, carotenoids and lipids. There is also a Cl(-1) ion associated with D1 and D2, which is required for oxygen evolution. The PSII complex binds additional chlorophylls, carotenoids and specific lipids. serves as cofactor.

Its subcellular location is the plastid. It localises to the chloroplast thylakoid membrane. The catalysed reaction is 2 a plastoquinone + 4 hnu + 2 H2O = 2 a plastoquinol + O2. Functionally, photosystem II (PSII) is a light-driven water:plastoquinone oxidoreductase that uses light energy to abstract electrons from H(2)O, generating O(2) and a proton gradient subsequently used for ATP formation. It consists of a core antenna complex that captures photons, and an electron transfer chain that converts photonic excitation into a charge separation. The D1/D2 (PsbA/PsbD) reaction center heterodimer binds P680, the primary electron donor of PSII as well as several subsequent electron acceptors. D2 is needed for assembly of a stable PSII complex. The sequence is that of Photosystem II D2 protein from Guillardia theta (Cryptophyte).